Consider the following 313-residue polypeptide: Apolipoprotein E (313 aa).

The first 18 residues, M1–A18, serve as a signal peptide directing secretion. 8 tandem repeats follow at residues V79 to G100, P101 to A122, S123 to G144, Q145 to L166, R167 to E188, R189 to A209, G210 to R229, and G230 to E251. An 8 X 22 AA approximate tandem repeats region spans residues V79 to E251. Residues H157–R167 are LDL and other lipoprotein receptors binding. Position 161–164 (L161–R164) interacts with heparin. The lipid-binding and lipoprotein association stretch occupies residues A209–M286. H225–V232 is a binding site for heparin. Positions S262–H313 are homooligomerization. The interval R274 to M286 is specificity for association with VLDL.

The protein belongs to the apolipoprotein A1/A4/E family. As to quaternary structure, homotetramer. May interact with ABCA1; functionally associated with ABCA1 in the biogenesis of HDLs. May interact with APP/A4 amyloid-beta peptide; the interaction is extremely stable in vitro but its physiological significance is unclear. May interact with MAPT. May interact with MAP2. In the cerebrospinal fluid, interacts with secreted SORL1. Interacts with PMEL; this allows the loading of PMEL luminal fragment on ILVs to induce fibril nucleation. In terms of processing, APOE exists as multiple glycosylated and sialylated glycoforms within cells and in plasma. The extent of glycosylation and sialylation are tissue and context specific. Post-translationally, glycated in plasma VLDL. Phosphorylated by FAM20C in the extracellular medium.

It localises to the secreted. The protein localises to the extracellular space. Its subcellular location is the extracellular matrix. The protein resides in the extracellular vesicle. It is found in the endosome. It localises to the multivesicular body. Functionally, APOE is an apolipoprotein, a protein associating with lipid particles, that mainly functions in lipoprotein-mediated lipid transport between organs via the plasma and interstitial fluids. APOE is a core component of plasma lipoproteins and is involved in their production, conversion and clearance. Apolipoproteins are amphipathic molecules that interact both with lipids of the lipoprotein particle core and the aqueous environment of the plasma. As such, APOE associates with chylomicrons, chylomicron remnants, very low density lipoproteins (VLDL) and intermediate density lipoproteins (IDL) but shows a preferential binding to high-density lipoproteins (HDL). It also binds a wide range of cellular receptors including the LDL receptor/LDLR and the very low-density lipoprotein receptor/VLDLR that mediate the cellular uptake of the APOE-containing lipoprotein particles. Finally, APOE also has a heparin-binding activity and binds heparan-sulfate proteoglycans on the surface of cells, a property that supports the capture and the receptor-mediated uptake of APOE-containing lipoproteins by cells. The sequence is that of Apolipoprotein E (APOE) from Balaenoptera acutorostrata scammoni (North Pacific minke whale).